The chain runs to 154 residues: MDLSTLKPVAGSRKSSTRKARGFSAGKGKTAGRGQKGQKAREGKKLRLSFEGGQMPLMRRMPKRGFNNISRKEYAIVNLDQLNKFDDGTTVSASSLKEAGIIKKELSGVKVLASGKLNKKITIHAAKASQAAQDSIKEAGSKIILTTETADSEN.

Residues 1–61 (MDLSTLKPVA…GGQMPLMRRM (61 aa)) form a disordered region.

This sequence belongs to the universal ribosomal protein uL15 family. In terms of assembly, part of the 50S ribosomal subunit.

Its function is as follows. Binds to the 23S rRNA. This chain is Large ribosomal subunit protein uL15, found in Oenococcus oeni (strain ATCC BAA-331 / PSU-1).